Consider the following 318-residue polypeptide: L-malyl-CoA/beta-methylmalyl-CoA lyase (318 aa).

Phenylalanine 19, arginine 24, lysine 30, and arginine 76 together coordinate substrate. Residues glutamate 141 and aspartate 168 each coordinate Mg(2+). Substrate is bound by residues 167 to 168 (AD) and 251 to 252 (IH).

It belongs to the HpcH/HpaI aldolase family. As to quaternary structure, homohexamer. Dimer of trimers. Mg(2+) serves as cofactor. Mn(2+) is required as a cofactor.

It catalyses the reaction (S)-malyl-CoA = glyoxylate + acetyl-CoA. It carries out the reaction (2R,3S)-beta-methylmalyl-CoA = propanoyl-CoA + glyoxylate. Functionally, involved in the ethylmalonyl-CoA pathway for acetate assimilation. Catalyzes the reversible condensation of glyoxylate and acetyl-CoA to L-malyl-CoA and the reversible condensation of glyoxylate and propionyl-CoA to yield beta-methylmalyl-CoA. The chain is L-malyl-CoA/beta-methylmalyl-CoA lyase from Cereibacter sphaeroides (strain ATCC 17029 / ATH 2.4.9) (Rhodobacter sphaeroides).